A 344-amino-acid chain; its full sequence is Heat-inducible transcription repressor hrcA (344 aa).

Belongs to the HrcA family.

In terms of biological role, negative regulator of class I heat shock genes (grpE-dnaK-dnaJ and groELS operons). Prevents heat-shock induction of these operons. The chain is Heat-inducible transcription repressor hrcA from Streptococcus pyogenes serotype M3 (strain ATCC BAA-595 / MGAS315).